The primary structure comprises 269 residues: Undecaprenyl-diphosphatase (269 aa).

Helical transmembrane passes span 1–21, 40–59, 87–107, 117–137, 147–166, 188–208, 220–240, and 248–268; these read MDIM…ILPI, GLTF…CVYF, FFII…EKPI, LIAL…TTGP, LRGA…PGVS, FSFL…MGEL, PLLA…ALLL, and LYPF…YLFA.

The protein belongs to the UppP family.

The protein localises to the cell inner membrane. The enzyme catalyses di-trans,octa-cis-undecaprenyl diphosphate + H2O = di-trans,octa-cis-undecaprenyl phosphate + phosphate + H(+). Functionally, catalyzes the dephosphorylation of undecaprenyl diphosphate (UPP). Confers resistance to bacitracin. The polypeptide is Undecaprenyl-diphosphatase (Geobacter sulfurreducens (strain ATCC 51573 / DSM 12127 / PCA)).